Reading from the N-terminus, the 209-residue chain is FK506-binding protein 2B (209 aa).

Residues 1 to 19 (MRFSLLALLGTIVATSVSA) form the signal peptide. A PPIase FKBP-type domain is found at 47-136 (GDELSMHYTG…VFEVELLEIK (90 aa)). A helical membrane pass occupies residues 157-177 (FTSPSFLVSTGIIVALFLIVF). Positions 178-207 (KMAKKQDIAEANEKAAAATAEASTEKKEEK) form a coiled coil. The tract at residues 190–209 (EKAAAATAEASTEKKEEKKE) is disordered. A compositionally biased stretch (basic and acidic residues) spans 200–209 (STEKKEEKKE).

Belongs to the FKBP-type PPIase family. FKBP2 subfamily.

It is found in the membrane. It catalyses the reaction [protein]-peptidylproline (omega=180) = [protein]-peptidylproline (omega=0). Its activity is regulated as follows. Inhibited by both FK506 and rapamycin. In terms of biological role, PPIases accelerate the folding of proteins. It catalyzes the cis-trans isomerization of proline imidic peptide bonds in oligopeptides. The protein is FK506-binding protein 2B (FKBP3) of Rhizopus delemar (strain RA 99-880 / ATCC MYA-4621 / FGSC 9543 / NRRL 43880) (Mucormycosis agent).